The primary structure comprises 104 residues: Meiotically up-regulated gene 150 protein (104 aa).

Transmembrane regions (helical) follow at residues 30–50, 54–74, and 84–104; these read FFLK…KAWI, TISL…IPYF, and LLWF…SLEI.

It localises to the endoplasmic reticulum membrane. Its function is as follows. Has a role in meiosis. This chain is Meiotically up-regulated gene 150 protein (mug150), found in Schizosaccharomyces pombe (strain 972 / ATCC 24843) (Fission yeast).